Consider the following 43-residue polypeptide: Protein PsbN (43 aa).

A helical membrane pass occupies residues 5-27; it reads TLVAISISGLLVSFTGYALYTAF.

This sequence belongs to the PsbN family.

Its subcellular location is the plastid. The protein localises to the chloroplast thylakoid membrane. May play a role in photosystem I and II biogenesis. This chain is Protein PsbN, found in Eucalyptus globulus subsp. globulus (Tasmanian blue gum).